The primary structure comprises 443 residues: Xaa-Pro dipeptidase (443 aa).

Mn(2+)-binding residues include D246, D257, H339, E384, and E423.

It belongs to the peptidase M24B family. Bacterial-type prolidase subfamily. It depends on Mn(2+) as a cofactor.

The enzyme catalyses Xaa-L-Pro dipeptide + H2O = an L-alpha-amino acid + L-proline. Its function is as follows. Splits dipeptides with a prolyl residue in the C-terminal position. The sequence is that of Xaa-Pro dipeptidase from Pectobacterium carotovorum subsp. carotovorum (strain PC1).